The chain runs to 215 residues: Protein GrpE (215 aa).

The span at 1 to 28 shows a compositional bias: polar residues; sequence MKHTSDTPSNSDMPSDSQATQPNASATG. The segment at 1-52 is disordered; it reads MKHTSDTPSNSDMPSDSQATQPNASATGQAAHAYSSQAQRASADAQAVAGDE. Residues 29–52 show a composition bias toward low complexity; it reads QAAHAYSSQAQRASADAQAVAGDE.

This sequence belongs to the GrpE family. In terms of assembly, homodimer.

It localises to the cytoplasm. Participates actively in the response to hyperosmotic and heat shock by preventing the aggregation of stress-denatured proteins, in association with DnaK and GrpE. It is the nucleotide exchange factor for DnaK and may function as a thermosensor. Unfolded proteins bind initially to DnaJ; upon interaction with the DnaJ-bound protein, DnaK hydrolyzes its bound ATP, resulting in the formation of a stable complex. GrpE releases ADP from DnaK; ATP binding to DnaK triggers the release of the substrate protein, thus completing the reaction cycle. Several rounds of ATP-dependent interactions between DnaJ, DnaK and GrpE are required for fully efficient folding. This Ralstonia pickettii (strain 12J) protein is Protein GrpE.